Consider the following 145-residue polypeptide: Protein SprT-like (145 aa).

Residues 5-140 enclose the SprT-like domain; the sequence is DYVREVSLAD…ACGRCHGRLI (136 aa). His-64 contacts Zn(2+). Glu-65 is an active-site residue. His-68 is a binding site for Zn(2+).

Belongs to the SprT family. It depends on Zn(2+) as a cofactor.

It is found in the cytoplasm. This chain is Protein SprT-like, found in Streptococcus equi subsp. equi (strain 4047).